Here is a 1020-residue protein sequence, read N- to C-terminus: Sodium/potassium-transporting ATPase subunit alpha-2 (1020 aa).

The propeptide occupies Met-1 to Ala-5. The segment at Met-1–Asp-31 is disordered. Over Gly-6–Pro-85 the chain is Cytoplasmic. Ser-10 carries the phosphoserine modification. The tract at residues Pro-80–Pro-82 is interaction with phosphoinositide-3 kinase. The helical transmembrane segment at Glu-86–Ala-106 threads the bilayer. Topologically, residues Ile-107–Tyr-129 are extracellular. The helical transmembrane segment at Leu-130–Ala-150 threads the bilayer. Residues Lys-151–Ile-286 lie on the Cytoplasmic side of the membrane. Positions Asp-212 to Pro-227 are enriched in polar residues. The interval Asp-212 to His-231 is disordered. The chain crosses the membrane as a helical span at residues Glu-287–Val-306. The Extracellular segment spans residues Leu-307–Ala-318. Residues Val-319–Ala-336 traverse the membrane as a helical segment. Topologically, residues Thr-337–Leu-769 are cytoplasmic. The active-site 4-aspartylphosphate intermediate is the Asp-374. 4 positions are modified to phosphoserine: Ser-439, Ser-450, Ser-496, and Ser-559. Thr-570 is subject to Phosphothreonine. Phosphoserine occurs at positions 587 and 672. Mg(2+)-binding residues include Asp-714 and Asp-718. A helical transmembrane segment spans residues Lys-770–Leu-789. The Extracellular segment spans residues Phe-790–Leu-799. Residues Gly-800 to Ala-820 form a helical membrane-spanning segment. The Cytoplasmic portion of the chain corresponds to Tyr-821–Lys-840. Ser-826 carries the post-translational modification Phosphoserine. Residues Leu-841–Phe-863 form a helical membrane-spanning segment. Over Phe-864–Cys-915 the chain is Extracellular. Residues His-916 to Lys-935 traverse the membrane as a helical segment. Residues Thr-936 to Asn-948 are Cytoplasmic-facing. Position 940 is a phosphoserine; by PKA (Ser-940). A helical membrane pass occupies residues Lys-949–Tyr-967. Residues Cys-968 to Val-982 are Extracellular-facing. A helical membrane pass occupies residues Thr-983 to Lys-1003. Residues Leu-1004 to Tyr-1020 are Cytoplasmic-facing.

Belongs to the cation transport ATPase (P-type) (TC 3.A.3) family. Type IIC subfamily. In terms of assembly, the sodium/potassium-transporting ATPase is composed of a catalytic alpha subunit, an auxiliary non-catalytic beta subunit and an additional regulatory subunit. Interacts with regulatory subunit FXYD1.

It localises to the membrane. The protein resides in the cell membrane. The catalysed reaction is K(+)(out) + Na(+)(in) + ATP + H2O = K(+)(in) + Na(+)(out) + ADP + phosphate + H(+). Functionally, this is the catalytic component of the active enzyme, which catalyzes the hydrolysis of ATP coupled with the exchange of sodium and potassium ions across the plasma membrane. This action creates the electrochemical gradient of sodium and potassium, providing the energy for active transport of various nutrients. This chain is Sodium/potassium-transporting ATPase subunit alpha-2 (ATP1A2), found in Pongo abelii (Sumatran orangutan).